The following is a 133-amino-acid chain: Cytidine deaminase (133 aa).

One can recognise a CMP/dCMP-type deaminase domain in the interval 4-126; sequence VDWNMLRGNA…DLLPDAFGLD (123 aa). 45–47 contributes to the substrate binding site; the sequence is NVE. Residue cysteine 56 coordinates Zn(2+). Glutamate 58 (proton donor) is an active-site residue. 2 residues coordinate Zn(2+): cysteine 89 and cysteine 92.

It belongs to the cytidine and deoxycytidylate deaminase family. In terms of assembly, homotetramer. Zn(2+) serves as cofactor.

It carries out the reaction cytidine + H2O + H(+) = uridine + NH4(+). The enzyme catalyses 2'-deoxycytidine + H2O + H(+) = 2'-deoxyuridine + NH4(+). Recycles cytidine and 2-deoxycytidine for uridine and 2-deoxyuridine synthesis, respectively. Catalyzes the hydrolytic deamination of cytidine and 2-deoxycytidine to form, respectively, uridine and 2-deoxyuridine. The sequence is that of Cytidine deaminase (cdd) from Mycobacterium tuberculosis (strain CDC 1551 / Oshkosh).